Here is a 560-residue protein sequence, read N- to C-terminus: MIILKRNIVFLLIIIIVLGIFIATSIEIKNYKLSLNQNKNEISKNPPIWPAPFYGQFGNNSILISKEFNFTIISDSTLLLNKTLSKYYNLIFTQDNLINSSSNTLNKLNINLKSKNEILKFGFDESYKLIIKNNENSKLEGNTVYGIMRGLETFYQLIKYNFSDNSYFIENCLPLIINDKPRFPHRGVMLDTSRHFYSVDTILKVIESLSYNKFNTLHWHIIDSQSFPLSSKSYPNLINGAWSKSEIYSYHDIKRIIKYGKENGIRIQLEIDMPGHAKSWSVGYPDLLPHGWNDSTTTIKCPDYDVPLDPSSPLSLPISFGLLSEFSGTDYGYNPNYDDKSNNLFNLTVDDLFHVGGDEIEYQCWNNSKRIKDWMNENNLKTFQDVAKQFQLKIIKQLLKIGKIPVLWEDTFQLFYKDLPKDVIVEIYHDQSTAINATNNGYKIISSIARYWYLEYSYSNWIRAYNFEPTLNISKSNIHLVLGGEGAIWSESIDSSNLFQKLYPTSSAIAERLWSPIYYTNLLNAKSRLQSFRCSLLKRGINSAPLNNSSPLSAFSCYNS.

The signal sequence occupies residues 1 to 25 (MIILKRNIVFLLIIIIVLGIFIATS). Residues Asn-59, Asn-69, Asn-81, Asn-99, Asn-161, Asn-293, and Asn-346 are each glycosylated (N-linked (GlcNAc...) asparagine). The active-site Proton donor is the Glu-359. 4 N-linked (GlcNAc...) asparagine glycosylation sites follow: Asn-366, Asn-436, Asn-472, and Asn-547.

It belongs to the glycosyl hydrolase 20 family.

It localises to the lysosome. It catalyses the reaction Hydrolysis of terminal non-reducing N-acetyl-D-hexosamine residues in N-acetyl-beta-D-hexosaminides.. Its function is as follows. Responsible for the degradation of GM2 gangliosides, and a variety of other molecules containing terminal N-acetyl hexosamines. The polypeptide is Beta-hexosaminidase subunit B1 (hexb1) (Dictyostelium discoideum (Social amoeba)).